Here is a 436-residue protein sequence, read N- to C-terminus: Hydrogenobyrinate a,c-diamide synthase (436 aa).

Positions 244–435 constitute a GATase cobBQ-type domain; the sequence is RIAVARDDAF…MHVIDFSGEA (192 aa). The Nucleophile role is filled by Cys-327.

Belongs to the CobB/CbiA family. Mg(2+) is required as a cofactor.

The enzyme catalyses hydrogenobyrinate + 2 L-glutamine + 2 ATP + 2 H2O = hydrogenobyrinate a,c-diamide + 2 L-glutamate + 2 ADP + 2 phosphate + 2 H(+). It functions in the pathway cofactor biosynthesis; adenosylcobalamin biosynthesis; cob(II)yrinate a,c-diamide from precorrin-2 (aerobic route): step 9/10. In terms of biological role, catalyzes the ATP-dependent amidation of the two carboxylate groups at positions a and c of hydrogenobyrinate, using either L-glutamine or ammonia as the nitrogen source. The chain is Hydrogenobyrinate a,c-diamide synthase from Brucella ovis (strain ATCC 25840 / 63/290 / NCTC 10512).